We begin with the raw amino-acid sequence, 352 residues long: PDZ and LIM domain protein 2 (352 aa).

The PDZ domain occupies 1–84 (MALTVDVAGP…PLRLQLDRSQ (84 aa)). Disordered regions lie at residues 69–95 (IRQS…NGDS) and 108–141 (VRTH…PPPF). Residues 81 to 95 (DRSQAASPGQTNGDS) are compositionally biased toward polar residues. Positions 117–135 (SLRSSYSSPTSLSPRAGSP) are enriched in low complexity. Residue S124 is modified to Phosphoserine. T126 carries the phosphothreonine modification. Phosphoserine occurs at positions 127, 129, 134, 137, 143, 161, 197, 203, 213, and 266. Disordered regions lie at residues 170–214 (LSYS…GGSL) and 253–275 (ERGG…PASR). Over residues 258 to 275 (PAFLPSSLSPQSSLPASR) the composition is skewed to low complexity. An LIM zinc-binding domain is found at 284–344 (HTCEKCSTSI…EKHARQRYSA (61 aa)).

As to quaternary structure, interacts with alpha-actinins ACTN1 and ACTN4, FLNA and MYH9. Interacts (via LIM zinc-binding domain) with MKRN2.

Its subcellular location is the cytoplasm. It is found in the cytoskeleton. Probable adapter protein located at the actin cytoskeleton that promotes cell attachment. Necessary for the migratory capacity of epithelial cells. Overexpression enhances cell adhesion to collagen and fibronectin and suppresses anchorage independent growth. May contribute to tumor cell migratory capacity. The chain is PDZ and LIM domain protein 2 (PDLIM2) from Macaca fascicularis (Crab-eating macaque).